Consider the following 435-residue polypeptide: GTPase Der (435 aa).

2 consecutive EngA-type G domains span residues 4–167 and 175–350; these read PIVA…SPDA and ISFS…ENKN. GTP-binding positions include 10–17, 57–61, 119–122, 181–188, 228–232, and 293–296; these read GQPNVGKS, DTGGI, NKAD, GRPNVGKS, DTAGI, and NKWD. A KH-like domain is found at 351–435; that stretch reads QRIQSSVLND…PIKILPRKRK (85 aa).

This sequence belongs to the TRAFAC class TrmE-Era-EngA-EngB-Septin-like GTPase superfamily. EngA (Der) GTPase family. In terms of assembly, associates with the 50S ribosomal subunit.

In terms of biological role, GTPase that plays an essential role in the late steps of ribosome biogenesis. The sequence is that of GTPase Der from Lactobacillus delbrueckii subsp. bulgaricus (strain ATCC 11842 / DSM 20081 / BCRC 10696 / JCM 1002 / NBRC 13953 / NCIMB 11778 / NCTC 12712 / WDCM 00102 / Lb 14).